We begin with the raw amino-acid sequence, 181 residues long: MKLIVGLGNPGTEYEKTRHNIGFMAVDKICEKLNISLNEKKFNGIFYRNKDFILAKPLTYMNKSGDFVQALMQYYDISVEDLIVVYDDMDLLIGKAVIRQKGSSGGHNGIKDIIEKLKTENIKRLKVGIGRGDNAINFVLGKFSIADYQIIDKILDGVADALVSCIYNDVRFVMNKFNGSF.

Y14 lines the tRNA pocket. The Proton acceptor role is filled by H19. Positions 60, 62, and 108 each coordinate tRNA.

Belongs to the PTH family. Monomer.

The protein localises to the cytoplasm. It catalyses the reaction an N-acyl-L-alpha-aminoacyl-tRNA + H2O = an N-acyl-L-amino acid + a tRNA + H(+). In terms of biological role, hydrolyzes ribosome-free peptidyl-tRNAs (with 1 or more amino acids incorporated), which drop off the ribosome during protein synthesis, or as a result of ribosome stalling. Its function is as follows. Catalyzes the release of premature peptidyl moieties from peptidyl-tRNA molecules trapped in stalled 50S ribosomal subunits, and thus maintains levels of free tRNAs and 50S ribosomes. The chain is Peptidyl-tRNA hydrolase from Metamycoplasma arthritidis (strain 158L3-1) (Mycoplasma arthritidis).